We begin with the raw amino-acid sequence, 208 residues long: Small ribosomal subunit protein uS4 (208 aa).

The S4 RNA-binding domain occupies 98–159 (LRLDNVVFRL…RSKKVVRITE (62 aa)).

The protein belongs to the universal ribosomal protein uS4 family. As to quaternary structure, part of the 30S ribosomal subunit. Contacts protein S5. The interaction surface between S4 and S5 is involved in control of translational fidelity.

Its function is as follows. One of the primary rRNA binding proteins, it binds directly to 16S rRNA where it nucleates assembly of the body of the 30S subunit. Functionally, with S5 and S12 plays an important role in translational accuracy. In Anaeromyxobacter dehalogenans (strain 2CP-1 / ATCC BAA-258), this protein is Small ribosomal subunit protein uS4.